A 148-amino-acid chain; its full sequence is HTH-type transcriptional regulator Ptr1 (148 aa).

In terms of domain architecture, HTH asnC-type spans 2-63 (LDRIDLKILR…SINPKNLGFE (62 aa)). The segment at residues 21-40 (FREIGRELGISEGTVRNRVK) is a DNA-binding region (H-T-H motif).

As to quaternary structure, homodimer.

Participates in positive as well as negative regulation of transcription. Binds to its own promoter. This is HTH-type transcriptional regulator Ptr1 (ptr1) from Methanocaldococcus jannaschii (strain ATCC 43067 / DSM 2661 / JAL-1 / JCM 10045 / NBRC 100440) (Methanococcus jannaschii).